The chain runs to 603 residues: NADH-ubiquinone oxidoreductase chain 5 (603 aa).

A run of 16 helical transmembrane segments spans residues 4 to 24, 36 to 56, 87 to 107, 114 to 134, 137 to 157, 171 to 191, 200 to 220, 241 to 261, 272 to 292, 301 to 320, 325 to 347, 366 to 386, 407 to 429, 457 to 477, 482 to 502, and 583 to 603; these read YTTMAILTLTSLIPPITATLI, VKMTIASTFMISLFPTMMFMC, MMFIPIALFVTWSIMEFSLWY, INQFFKYLLIFLTTMLILVTA, LFQLFIGWEGVGIMSFLLIGW, AILYNRIGDIGFILALAWFLL, QMILLNSNPNFLPLAGLLLAA, TPVSALLHSSTMVVAGVFLLI, LIQTLTLCLGAITTLFTAICA, IVAFSTSSQLGLMVVTIGIN, AFLHICTHAFFKAMLFMCSGSII, LPLTSTSLTIGSLALTGMPFL, WALSTTLIATSLTSAYSTRMILL, LTIGSLLAGFLIINSIPPTSP, IPLYLKLTALSITLLGFLTAF, and MIKLYSLSLLIPLSLTLLLIM.

This sequence belongs to the complex I subunit 5 family. In terms of assembly, core subunit of respiratory chain NADH dehydrogenase (Complex I) which is composed of 45 different subunits.

It localises to the mitochondrion inner membrane. The catalysed reaction is a ubiquinone + NADH + 5 H(+)(in) = a ubiquinol + NAD(+) + 4 H(+)(out). Functionally, core subunit of the mitochondrial membrane respiratory chain NADH dehydrogenase (Complex I) which catalyzes electron transfer from NADH through the respiratory chain, using ubiquinone as an electron acceptor. Essential for the catalytic activity and assembly of complex I. The chain is NADH-ubiquinone oxidoreductase chain 5 (MT-ND5) from Hylobates lar (Lar gibbon).